The chain runs to 243 residues: Transcription factor TCP6 (243 aa).

Residues 1 to 55 (MVMEPKKNQNLPSFLNPSRQNQDNDKKRKQTEVKGFDIVVGEKRKKKENEEEDQE) are disordered. Over residues 8 to 21 (NQNLPSFLNPSRQN) the composition is skewed to polar residues. The span at 22–35 (QDNDKKRKQTEVKG) shows a compositional bias: basic and acidic residues. The stretch at 42-66 (EKRKKKENEEEDQEIQILYEKEKKK) forms a coiled coil. A TCP domain is found at 68-122 (NKDRHLKVEGRGRRVRLPPLCAARIYQLTKELGHKSDGETLEWLLQHAEPSILSA).

In terms of assembly, interacts with SPL.

It is found in the nucleus. The sequence is that of Transcription factor TCP6 (TCP6) from Arabidopsis thaliana (Mouse-ear cress).